Consider the following 206-residue polypeptide: Small ribosomal subunit protein uS4 (206 aa).

An S4 RNA-binding domain is found at 96 to 156 (GRLDNVVYRM…EKAKKQSRVK (61 aa)).

It belongs to the universal ribosomal protein uS4 family. As to quaternary structure, part of the 30S ribosomal subunit. Contacts protein S5. The interaction surface between S4 and S5 is involved in control of translational fidelity.

Its function is as follows. One of the primary rRNA binding proteins, it binds directly to 16S rRNA where it nucleates assembly of the body of the 30S subunit. Functionally, with S5 and S12 plays an important role in translational accuracy. The sequence is that of Small ribosomal subunit protein uS4 from Pectobacterium atrosepticum (strain SCRI 1043 / ATCC BAA-672) (Erwinia carotovora subsp. atroseptica).